We begin with the raw amino-acid sequence, 446 residues long: Phosphoglucosamine mutase (446 aa).

S103 acts as the Phosphoserine intermediate in catalysis. S103, D242, D244, and D246 together coordinate Mg(2+). Position 103 is a phosphoserine (S103).

The protein belongs to the phosphohexose mutase family. The cofactor is Mg(2+). In terms of processing, activated by phosphorylation.

It carries out the reaction alpha-D-glucosamine 1-phosphate = D-glucosamine 6-phosphate. Its function is as follows. Catalyzes the conversion of glucosamine-6-phosphate to glucosamine-1-phosphate. The polypeptide is Phosphoglucosamine mutase (Corynebacterium urealyticum (strain ATCC 43042 / DSM 7109)).